Consider the following 601-residue polypeptide: Glutathione-regulated potassium-efflux system protein KefB (601 aa).

Transmembrane regions (helical) follow at residues 4–24 (SDLLLAGVLFLFAAVIAVPLA), 29–49 (IGAVLGYLLAGIAIGPWGLGF), 55–75 (EILHFSELGVVFLMFIIGLEL), 87–107 (IFGVGAAQVMLSAAILGGLLM), 115–135 (AAVVGGIGLAMSSTAMALQLM), 152–172 (VLLFQDLAVIPALALVPLLAG), 177–197 (HVNWLTVGMKVLAFAGMLIGG), 207–227 (FIASSGVREVFTAATLLLVLG), 230–250 (LFMEALGLSMALGTFIAGVLL), 268–288 (GLLLGLFFISVGMALNLGVLY), 291–311 (LLWVAVSVAVLVAVKMLVLYL), 326–346 (FAGVLSQGGEFAFVLFSLPAS), and 356–376 (ALLLVAVTLSMMTTPLLMKGI). Positions 400 to 519 (KPQVIIVGFG…AGVTQFSRET (120 aa)) constitute an RCK N-terminal domain.

The protein belongs to the monovalent cation:proton antiporter 2 (CPA2) transporter (TC 2.A.37) family. KefB subfamily. As to quaternary structure, interacts with the regulatory subunit KefG.

The protein localises to the cell inner membrane. Its function is as follows. Pore-forming subunit of a potassium efflux system that confers protection against electrophiles. Catalyzes K(+)/H(+) antiport. In Klebsiella pneumoniae (strain 342), this protein is Glutathione-regulated potassium-efflux system protein KefB.